Reading from the N-terminus, the 758-residue chain is Matrix metalloproteinase-2 (758 aa).

Residues 1–17 (MFSKYVLATLLALFAQS) form the signal peptide. His257 provides a ligand contact to Zn(2+). Residue Glu258 is part of the active site. 2 residues coordinate Zn(2+): His261 and His267. Residues 335–514 (AYWPWNNPSN…HNKPRKPKPD (180 aa)) form a disordered region. A compositionally biased stretch (low complexity) spans 338 to 348 (PWNNPSNNPNN). The segment covering 349-476 (DRNRARERQE…EWERRNRNGA (128 aa)) has biased composition (basic and acidic residues). A compositionally biased stretch (low complexity) spans 479–494 (PVTPTANTTPRPTNKP). The span at 499–510 (HRQHHHHNKPRK) shows a compositional bias: basic residues. Hemopexin repeat units follow at residues 513–561 (PDSC…WSAL), 565–610 (LTKV…GLPP), 612–659 (LTHI…WSGV), and 660–707 (GYNI…WMQC). Cys516 and Cys707 form a disulfide bridge. A helical membrane pass occupies residues 739–756 (LRINHFILSILLLAIANW). Topologically, residues 757-758 (RS) are cytoplasmic.

The protein belongs to the peptidase M10A family. It depends on Ca(2+) as a cofactor. The cofactor is Zn(2+). As to expression, widely expressed during embryogenesis including in the mesoderm, developing gut, central and peripheral nervous systems and imaginal disks. In the embryonic nervous system, expressed in neurons and glia. In third instar larvae, strongly expressed in the morphogenetic furrow of eye imaginal disks and in the optic lobe region of the brain. Expressed in posterior follicle cells in all mature stage 14 follicles but not in earlier follicles and is also expressed in some anterior follicle cells that help form dorsal eggshell structures.

It is found in the cell membrane. Functionally, has metalloproteinase activity. Proteolytically cleaves the PGRP-LC receptor; involved in gut-fat body innate immunological communication (GFIC)-mediated activation of the imd/Relish signal transduction pathway. Required for larval tissue histolysis during metamorphosis and is involved in pupal head eversion and fusion of the wing imaginal tissue. Required for growth of the dorsal air sac primordium and development of the dorsal air sacs. Promotes embryonic motor axon fasciculation. Cleaves and activates frac to promote motor axon bundling during outgrowth. Promotes the reshaping of adult sensory neuron dendrites from a radial to lattice-like shape which occurs after eclosion by degrading the basement membrane on which the dendrites grow. Involved in inhibition of follicle stem cell proliferation by cleaving Dlp, inhibiting its interaction with wg and preventing Dlp-mediated spreading of wg to follicle stem cells to enhance their proliferation. Plays a role in wound healing. Involved in fat body dissociation which occurs during metamorphosis by degrading basement membrane components, leading to destruction of cell-basement membrane junctions. Required for posterior follicle cell degradation and ovulation. This is Matrix metalloproteinase-2 from Drosophila melanogaster (Fruit fly).